The chain runs to 713 residues: Cyclomaltodextrin glucanotransferase (713 aa).

A signal peptide spans 1–27 (MKKISKLTTALALSLSLALSLLGPAHA). Residues 28–165 (APDTSVSNKQ…NIKVIIDFAP (138 aa)) form an A1 region. Positions 54, 56, 59, and 60 each coordinate Ca(2+). A disulfide bridge connects residues C70 and C77. G78 and D80 together coordinate Ca(2+). 127–128 (YW) lines the substrate pocket. Ca(2+) is bound at residue N166. Residues 166 to 229 (NHTSPASLDQ…NLYDLADLNH (64 aa)) are b. A substrate-binding site is contributed by H167. I217 serves as a coordination point for Ca(2+). 220–223 (NLYD) contributes to the substrate binding site. D226 provides a ligand contact to Ca(2+). An A2 region spans residues 230 to 433 (NNSTVDTYLK…LRKSNPAIAY (204 aa)). R254 lines the substrate pocket. D256 acts as the Nucleophile in catalysis. 259-260 (KH) provides a ligand contact to substrate. H260 contacts Ca(2+). E284 acts as the Proton donor in catalysis. Substrate contacts are provided by H354, D398, and R402. The c stretch occupies residues 434 to 522 (GTTQERWINN…GTAVWQYTTA (89 aa)). A d region spans residues 523–609 (VTAPTIGHVG…SNVHDNFEVL (87 aa)). Positions 526-607 (PTIGHVGPMM…TSSNVHDNFE (82 aa)) constitute an IPT/TIG domain. In terms of domain architecture, CBM20 spans 608–713 (VLSGDQVSVR…TATINVNWQP (106 aa)). The interval 610 to 713 (SGDQVSVRFV…TATINVNWQP (104 aa)) is e.

Belongs to the glycosyl hydrolase 13 family. Monomer. Requires Ca(2+) as cofactor.

The protein localises to the secreted. The enzyme catalyses Cyclizes part of a (1-&gt;4)-alpha-D-glucan chain by formation of a (1-&gt;4)-alpha-D-glucosidic bond.. This chain is Cyclomaltodextrin glucanotransferase (cgt), found in Bacillus sp. (strain 17-1).